Reading from the N-terminus, the 339-residue chain is Ribosomal RNA small subunit methyltransferase C (339 aa).

This sequence belongs to the methyltransferase superfamily. RsmC family. In terms of assembly, monomer.

It is found in the cytoplasm. The enzyme catalyses guanosine(1207) in 16S rRNA + S-adenosyl-L-methionine = N(2)-methylguanosine(1207) in 16S rRNA + S-adenosyl-L-homocysteine + H(+). In terms of biological role, specifically methylates the guanine in position 1207 of 16S rRNA in the 30S particle. This Aliivibrio salmonicida (strain LFI1238) (Vibrio salmonicida (strain LFI1238)) protein is Ribosomal RNA small subunit methyltransferase C.